A 382-amino-acid polypeptide reads, in one-letter code: Beta-lactamase CMY-10 (382 aa).

Positions 1 to 23 are cleaved as a signal peptide; the sequence is MQQRQSILWGAVATLMWAGLAHA. The active-site Acyl-ester intermediate is serine 88. Residue serine 88 coordinates AMP. The GMP site is built by serine 88, glutamine 144, tyrosine 174, threonine 336, serine 338, and asparagine 363. 6 residues coordinate IMP: serine 88, glutamine 144, tyrosine 174, threonine 336, serine 338, and asparagine 363. AMP is bound at residue tyrosine 174. Residue serine 338 participates in AMP binding.

Belongs to the class-C beta-lactamase family. In terms of assembly, monomer.

The enzyme catalyses a beta-lactam + H2O = a substituted beta-amino acid. Inhibited by various nucleotides in vitro, including adenosine 5'-(P-acetyl)monophosphate (acAMP), inosine-5'-monophosphate (IMP) and guanosine-5'-monophosphate (GMP); IMP and GMP exhibit strongest competitive inhibition. Inhibited by the beta-lactamase-blocking agent, avibactam. Inhibited by clavulanic acid. Weakly inhibited by citric acid. Functionally, class C beta-lactamase which confers resistance to penicillins and cephalosporins. Has benzylpenicillin-, ceftazidime-, nitrocefin- and imipenem-hydrolyzing activity. The protein is Beta-lactamase CMY-10 of Klebsiella aerogenes (Enterobacter aerogenes).